Consider the following 389-residue polypeptide: Chalcone synthase 4-2 (389 aa).

Cys164 is an active-site residue.

It belongs to the thiolase-like superfamily. Chalcone/stilbene synthases family.

It carries out the reaction (E)-4-coumaroyl-CoA + 3 malonyl-CoA + 3 H(+) = 2',4,4',6'-tetrahydroxychalcone + 3 CO2 + 4 CoA. It functions in the pathway secondary metabolite biosynthesis; flavonoid biosynthesis. The primary product of this enzyme is 4,2',4',6'-tetrahydroxychalcone (also termed naringenin-chalcone or chalcone) which can under specific conditions spontaneously isomerize into naringenin. The chain is Chalcone synthase 4-2 (CHS4-2) from Medicago sativa (Alfalfa).